The following is a 773-amino-acid chain: C-Maf-inducing protein (773 aa).

Positions 1–30 (MDVTSSSGGGGDPRQIEETKPLLGGDVSAP) are disordered. One can recognise a PH domain in the interval 54-163 (LLQEGDIQVC…HSLQWKKKIY (110 aa)). Phosphoserine is present on residues Ser349, Ser377, Ser382, and Ser660. LRR repeat units follow at residues 663–686 (NLENLSLAFTNVTSACAEHLIKLP), 687–707 (SLKQLNLWSTQFGDAGLRLLS), 712–732 (MLQVLNLCETPVTDAGLLALS), and 736–756 (SLCSLNMNSTKLSADTYEDLK).

Interacts with FLNA. Isoform 1 is expressed in peripheral blood mononuclear cells and kidney. Lower expression in brain and liver. Expression is down-regulated in activated cells. Isoform 2 is expressed in lymphocyte precursors, however, expression shuts down during maturation and differentiation in thymus and fetal liver.

The protein localises to the nucleus. It is found in the cytoplasm. Functionally, plays a role in T-cell signaling pathway. Isoform 2 may play a role in T-helper 2 (Th2) signaling pathway and seems to represent the first proximal signaling protein that links T-cell receptor-mediated signal to the activation of c-Maf Th2 specific factor. The sequence is that of C-Maf-inducing protein (CMIP) from Homo sapiens (Human).